The chain runs to 465 residues: Serine/threonine-protein kinase AtPK1/AtPK6 (465 aa).

An LVxCxE motif motif is present at residues 91–96 (LVECLE). The Protein kinase domain occupies 134 to 389 (FEVMKVVGKG…AEEIKQHKWF (256 aa)). Residues 140-148 (VGKGAFGKV) and lysine 163 contribute to the ATP site. Residue aspartate 257 is the Proton acceptor of the active site. The segment at 275–301 (DFGLAKEFEENTRSNSMCGTTEYMAPE) is activation loop. Residue serine 290 is modified to Phosphoserine; by PDPK1. The AGC-kinase C-terminal domain maps to 390-460 (KGINWKKLEA…VRPPPSFLHQ (71 aa)). Threonine 449 carries the post-translational modification Phosphothreonine; by TOR.

It belongs to the protein kinase superfamily. AGC Ser/Thr protein kinase family. S6 kinase subfamily. Interacts with RAPTOR1. Interacts with RBR1-E2FB complex through its LVxCxE motif. Interacts with TAP46. Binds to MRF1. Undergoes serine-specific autophosphorylation. Phosphorylated at Thr-449 by TOR. Expressed in all tissues.

The protein resides in the cytoplasm. It localises to the nucleus. It carries out the reaction L-seryl-[protein] + ATP = O-phospho-L-seryl-[protein] + ADP + H(+). The catalysed reaction is L-threonyl-[protein] + ATP = O-phospho-L-threonyl-[protein] + ADP + H(+). With respect to regulation, activated by PDK1. Repressed during osmotic stress. Functionally, downstream effector of TOR signaling pathway involved in osmotic stress response. Could be involved in the control of plant growth and development. Phosphorylates the ribosomal proteins P14, P16 and S6. Functions as a repressor of cell proliferation and required for maintenance of chromosome stability and ploidy levels through the RBR1-E2F pathway. Mediates the phosphorylation of MRFs (e.g. MRF1). In Arabidopsis thaliana (Mouse-ear cress), this protein is Serine/threonine-protein kinase AtPK1/AtPK6.